A 381-amino-acid chain; its full sequence is Meiotic recombination protein SPO11-1 (381 aa).

The Topo IIA-type catalytic domain occupies 23–162; sequence EEAATLLHRI…LNVVPVAKGL (140 aa). Tyr123 (O-(5'-phospho-DNA)-tyrosine intermediate) is an active-site residue. The Mg(2+) site is built by Glu209 and Asp261.

Belongs to the TOP6A family. Mg(2+) is required as a cofactor. As to expression, highly expressed in flowers before pollination. Expressed in roots and shoots.

The protein localises to the nucleus. It carries out the reaction ATP-dependent breakage, passage and rejoining of double-stranded DNA.. Required for meiotic recombination. Mediates DNA cleavage that forms the double-strand breaks (DSB) that initiate meiotic recombination. May be involved in plant growth and development, and stress tolerance. The sequence is that of Meiotic recombination protein SPO11-1 (SPO11-1) from Oryza sativa subsp. indica (Rice).